A 166-amino-acid chain; its full sequence is Endoribonuclease YbeY (166 aa).

Residues histidine 111, histidine 115, and histidine 121 each coordinate Zn(2+). A disordered region spans residues leucine 141–glutamate 166. Basic and acidic residues predominate over residues alanine 153–glutamate 166.

This sequence belongs to the endoribonuclease YbeY family. The cofactor is Zn(2+).

The protein resides in the cytoplasm. Its function is as follows. Single strand-specific metallo-endoribonuclease involved in late-stage 70S ribosome quality control and in maturation of the 3' terminus of the 16S rRNA. The polypeptide is Endoribonuclease YbeY (Pseudomonas savastanoi pv. phaseolicola (strain 1448A / Race 6) (Pseudomonas syringae pv. phaseolicola (strain 1448A / Race 6))).